The sequence spans 100 residues: Small ribosomal subunit protein uS14c (100 aa).

The protein belongs to the universal ribosomal protein uS14 family. As to quaternary structure, part of the 30S ribosomal subunit.

The protein localises to the plastid. It localises to the chloroplast. In terms of biological role, binds 16S rRNA, required for the assembly of 30S particles. This is Small ribosomal subunit protein uS14c from Aethionema cordifolium (Lebanon stonecress).